The following is a 544-amino-acid chain: Chaperonin GroEL 2 (544 aa).

ATP-binding positions include 29–32 (TLGP), 86–90 (DGTTT), glycine 413, and aspartate 495. The segment at 525–544 (PEPKSNKPAGGGGGVDDYDY) is disordered. Residues 533–544 (AGGGGGVDDYDY) show a composition bias toward gly residues.

This sequence belongs to the chaperonin (HSP60) family. Forms a cylinder of 14 subunits composed of two heptameric rings stacked back-to-back. Interacts with the co-chaperonin GroES.

The protein localises to the cytoplasm. The enzyme catalyses ATP + H2O + a folded polypeptide = ADP + phosphate + an unfolded polypeptide.. Its function is as follows. Together with its co-chaperonin GroES, plays an essential role in assisting protein folding. The GroEL-GroES system forms a nano-cage that allows encapsulation of the non-native substrate proteins and provides a physical environment optimized to promote and accelerate protein folding. The protein is Chaperonin GroEL 2 of Synechococcus sp. (strain JA-3-3Ab) (Cyanobacteria bacterium Yellowstone A-Prime).